The sequence spans 132 residues: Interleukin-13 (132 aa).

The signal sequence occupies residues 1-18 (MALLLTMVIALTCLGGFA). 4 N-linked (GlcNAc...) asparagine glycosylation sites follow: Asn38, Asn49, Asn57, and Asn72. Cystine bridges form between Cys48/Cys76 and Cys64/Cys90.

The protein belongs to the IL-4/IL-13 family. Interacts with IL13RA2.

The protein resides in the secreted. Cytokine that plays important roles in allergic inflammation and immune response to parasite infection. Synergizes with IL2 in regulating interferon-gamma synthesis. Stimulates B-cell proliferation, and activation of eosinophils, basophils, and mast cells. Plays an important role in controlling IL33 activity by modulating the production of transmembrane and soluble forms of interleukin-1 receptor-like 1/IL1RL1. Displays the capacity to antagonize Th1-driven proinflammatory immune response and downregulates synthesis of many proinflammatory cytokines including IL1, IL6, IL10, IL12 and TNF-alpha through a mechanism that partially involves suppression of NF-kappa-B. Also functions on nonhematopoietic cells, including endothelial cells where it induces vascular cell adhesion protein 1/VCAM1, which is important in the recruitment of eosinophils. Exerts its biological effects through its receptors which comprises the IL4R chain and the IL13RA1 chain, to activate JAK1 and TYK2, leading to the activation of STAT6. Aside from IL13RA1, another receptor IL13RA2 acts as a high affinity decoy for IL13 and mediates internalization and depletion of extracellular IL13. This chain is Interleukin-13 (IL13), found in Macaca thibetana (Pere David's macaque).